Consider the following 201-residue polypeptide: Recombination protein RecR (201 aa).

The C4-type zinc finger occupies 57-72 (CADCRTFTEQDVCNIC). Positions 81-176 (GQICVVESPA…EASRIAHGVP (96 aa)) constitute a Toprim domain.

The protein belongs to the RecR family.

Its function is as follows. May play a role in DNA repair. It seems to be involved in an RecBC-independent recombinational process of DNA repair. It may act with RecF and RecO. The sequence is that of Recombination protein RecR from Salmonella agona (strain SL483).